We begin with the raw amino-acid sequence, 438 residues long: Serine/threonine-protein kinase VIK (438 aa).

Residues 1 to 31 (MSSDSPAAGDGGEQAAAGTSVPSPSYDKQKE) form a disordered region. ANK repeat units follow at residues 36–65 (SRTSLILWHAHQNDAAAVRKLLEEDPTLVH), 70–99 (DKRTPLHVASLHGWIDVVKCLLEFGADVNA), and 103–133 (WKNTPLADAEGARKQKMIELLKSHGGLSYGQ). Residues 162 to 427 (FSNAAMIGKG…KRLEKIKETL (266 aa)) enclose the Protein kinase domain. ATP is bound by residues 168–176 (IGKGSFGEI) and K189. Catalysis depends on D285, which acts as the Proton acceptor.

Belongs to the protein kinase superfamily. Ser/Thr protein kinase family. In terms of assembly, interacts with BRL2. Binds to MSSP1/TMT1 at the tonoplast. Post-translationally, phosphorylated. As to expression, restricted to mature vascular cells. Mostly expressed in mature leaves and seeds, and, to a lower level, in seedlings, young leaves, flowers and siliques.

The protein localises to the vacuole. The enzyme catalyses L-seryl-[protein] + ATP = O-phospho-L-seryl-[protein] + ADP + H(+). It catalyses the reaction L-threonyl-[protein] + ATP = O-phospho-L-threonyl-[protein] + ADP + H(+). Functionally, serine/threonine protein kinase which may function as an adapter protein for BRL2. Required during vascular development for the establishment of vein pattern in foliar organs. Mediates MSSP1/TMT1 phosphorylation and activation to enhance its carrier activity and consequently vacuolar sugar accumulation, particularly in response to cold. The sequence is that of Serine/threonine-protein kinase VIK from Arabidopsis thaliana (Mouse-ear cress).